The sequence spans 229 residues: MLLKRAAGKEKDDDNRAGERRRMVYEQLISRGIENDDVIQSMLEVPRHRFVPKHLQEYAYQDGPLAIGEGQTISQPYIVALMIEALEPAPSDRVLEVGTGSGYAAAVLSRIVSVVYTIERFDSLARGARSLFQSLKYDNIYVRTGDGTKGWPEAAPFDGIIVSAGAPAVPQTLCGQLKPGGRLVAPVGDKRWQELLVVRRALDGGYNVKKLGTVFFVPLVGEEGWHDET.

Residue serine 74 is part of the active site.

This sequence belongs to the methyltransferase superfamily. L-isoaspartyl/D-aspartyl protein methyltransferase family.

Its subcellular location is the cytoplasm. The enzyme catalyses [protein]-L-isoaspartate + S-adenosyl-L-methionine = [protein]-L-isoaspartate alpha-methyl ester + S-adenosyl-L-homocysteine. Catalyzes the methyl esterification of L-isoaspartyl residues in peptides and proteins that result from spontaneous decomposition of normal L-aspartyl and L-asparaginyl residues. It plays a role in the repair and/or degradation of damaged proteins. The sequence is that of Protein-L-isoaspartate O-methyltransferase from Pelotomaculum thermopropionicum (strain DSM 13744 / JCM 10971 / SI).